We begin with the raw amino-acid sequence, 429 residues long: 3-phosphoshikimate 1-carboxyvinyltransferase (429 aa).

Positions 11, 12, and 16 each coordinate 3-phosphoshikimate. K11 lines the phosphoenolpyruvate pocket. Phosphoenolpyruvate contacts are provided by G82 and R110. 3-phosphoshikimate-binding residues include S155, Q157, D302, and K329. Phosphoenolpyruvate is bound at residue Q157. The active-site Proton acceptor is the D302. Positions 333 and 385 each coordinate phosphoenolpyruvate.

This sequence belongs to the EPSP synthase family. In terms of assembly, monomer.

It localises to the cytoplasm. It carries out the reaction 3-phosphoshikimate + phosphoenolpyruvate = 5-O-(1-carboxyvinyl)-3-phosphoshikimate + phosphate. The protein operates within metabolic intermediate biosynthesis; chorismate biosynthesis; chorismate from D-erythrose 4-phosphate and phosphoenolpyruvate: step 6/7. Functionally, catalyzes the transfer of the enolpyruvyl moiety of phosphoenolpyruvate (PEP) to the 5-hydroxyl of shikimate-3-phosphate (S3P) to produce enolpyruvyl shikimate-3-phosphate and inorganic phosphate. This chain is 3-phosphoshikimate 1-carboxyvinyltransferase, found in Helicobacter pylori (strain P12).